The primary structure comprises 737 residues: MEQTYEYAWIIPFIPLPVPMLIGAGLILFPTATKRFRRMWAFQSVLLLSIVMIFSIYLSIQQINSSSVYQYVWSWIINNDFSLDFGYLIDPLTSIMSILITTVGIMVLIYSDNYMAHDQGYLRFFAYMSFFSTSMLGLVTSSNLIQIYIFWELVGLCSYLLIGFWFTRPVAANACQKAFVTNRVGDFGLLLGILGFYWITGSFEFRDLFEIFNNLIYNNELNFLFVTLCAVLLFAGAVAKSAQFPLHVWLPDAMEGPTPISALIHAATMVAAGIFLVARLLPLFRVIPYIMYLISVIGIITVLLGATLALAQKDIKRGLAYSTMSQLGYMMLALGMGSYRSALFHLITHAYSKALLFLGSGSIIHSMETIVGYSPAKSQNMGLMGGLRKHVPITKITFLLGTLSLCGIPPLACFWSKDEILNDSWLYSPIFAIIAWATAGLTAFYMFRIYLLTFEGHLNAHFQNYGGKQKIPFYSISLWGKNGVKKNSCLLTMNNNESTYFLSKTKYPIAKNGRKMTRPFMTIAHFKHKAVSSYPYESDNTMLFPIFVLGLFTLFVGAIGIPFNQEGVNLDILSKWLAPSINLLHPKSNNSLDWNEFLKDAVVSVSIAYFGIFIASFLYKPIYSSLKNLEFINSFVKKGPKRILWDKILNGIYDWSYNRAYIDAFYTRFFVGGIRGLAEFTHFVDRRVIDGMTNGVGVISFIVGEGIKYIGGGRISSYLFLYLAYVSVFLLVYYLLF.

The next 16 helical transmembrane spans lie at 9–29, 40–60, 89–109, 125–145, 147–167, 185–205, 219–239, 258–278, 286–306, 327–347, 354–374, 396–416, 425–445, 543–563, 602–622, and 717–737; these read WIIPFIPLPVPMLIGAGLILF, WAFQSVLLLSIVMIFSIYLSI, IDPLTSIMSILITTVGIMVLI, FAYMSFFSTSMLGLVTSSNLI, IYIFWELVGLCSYLLIGFWFT, GDFGLLLGILGFYWITGSFEF, NELNFLFVTLCAVLLFAGAVA, TPISALIHAATMVAAGIFLVA, VIPYIMYLISVIGIITVLLGA, LGYMMLALGMGSYRSALFHLI, ALLFLGSGSIIHSMETIVGYS, ITFLLGTLSLCGIPPLACFWS, WLYSPIFAIIAWATAGLTAFY, LFPIFVLGLFTLFVGAIGIPF, VVSVSIAYFGIFIASFLYKPI, and SYLFLYLAYVSVFLLVYYLLF.

The protein belongs to the complex I subunit 5 family. NDH is composed of at least 16 different subunits, 5 of which are encoded in the nucleus.

It is found in the plastid. It localises to the chloroplast thylakoid membrane. The enzyme catalyses a plastoquinone + NADH + (n+1) H(+)(in) = a plastoquinol + NAD(+) + n H(+)(out). It catalyses the reaction a plastoquinone + NADPH + (n+1) H(+)(in) = a plastoquinol + NADP(+) + n H(+)(out). NDH shuttles electrons from NAD(P)H:plastoquinone, via FMN and iron-sulfur (Fe-S) centers, to quinones in the photosynthetic chain and possibly in a chloroplast respiratory chain. The immediate electron acceptor for the enzyme in this species is believed to be plastoquinone. Couples the redox reaction to proton translocation, and thus conserves the redox energy in a proton gradient. This is NAD(P)H-quinone oxidoreductase subunit 5, chloroplastic (ndhF) from Solanum lycopersicum (Tomato).